The sequence spans 70 residues: Small ribosomal subunit protein bS18 (70 aa).

The protein belongs to the bacterial ribosomal protein bS18 family. Part of the 30S ribosomal subunit. Forms a tight heterodimer with protein bS6.

Functionally, binds as a heterodimer with protein bS6 to the central domain of the 16S rRNA, where it helps stabilize the platform of the 30S subunit. The chain is Small ribosomal subunit protein bS18 from Salinibacter ruber (strain DSM 13855 / M31).